Here is a 132-residue protein sequence, read N- to C-terminus: Small ribosomal subunit protein eS12 (132 aa).

Ala-2 carries the post-translational modification N-acetylalanine. Lys-129 carries the N6-succinyllysine modification.

It belongs to the eukaryotic ribosomal protein eS12 family. In terms of assembly, part of the small subunit (SSU) processome, composed of more than 70 proteins and the RNA chaperone small nucleolar RNA (snoRNA) U3. Subunit of the 40S ribosomal complex.

The protein localises to the nucleus. Its subcellular location is the nucleolus. Functionally, part of the small subunit (SSU) processome, first precursor of the small eukaryotic ribosomal subunit. During the assembly of the SSU processome in the nucleolus, many ribosome biogenesis factors, an RNA chaperone and ribosomal proteins associate with the nascent pre-rRNA and work in concert to generate RNA folding, modifications, rearrangements and cleavage as well as targeted degradation of pre-ribosomal RNA by the RNA exosome. Subunit of the 40S ribosomal complex. This chain is Small ribosomal subunit protein eS12 (Rps12), found in Rattus norvegicus (Rat).